The following is a 192-amino-acid chain: Shikimate kinase (192 aa).

27-32 contacts ATP; sequence GTGKTT. Mg(2+) is bound at residue Thr-31. Asp-49, Arg-73, and Gly-95 together coordinate substrate. Residue Arg-133 coordinates ATP. Arg-152 is a binding site for substrate.

This sequence belongs to the shikimate kinase family. As to quaternary structure, monomer. Mg(2+) serves as cofactor.

It is found in the cytoplasm. The enzyme catalyses shikimate + ATP = 3-phosphoshikimate + ADP + H(+). It participates in metabolic intermediate biosynthesis; chorismate biosynthesis; chorismate from D-erythrose 4-phosphate and phosphoenolpyruvate: step 5/7. Its function is as follows. Catalyzes the specific phosphorylation of the 3-hydroxyl group of shikimic acid using ATP as a cosubstrate. This is Shikimate kinase from Hahella chejuensis (strain KCTC 2396).